We begin with the raw amino-acid sequence, 878 residues long: RNA-directed RNA polymerase (878 aa).

258–265 (GLPYVGRT) is a binding site for GTP. The RdRp catalytic domain occupies 397-597 (LVYADNIYIV…DKERLFCSAA (201 aa)). Residues 845–878 (GAGTSRPMGMEAPTRSKNAVKMAKRAQRQKESRQ) are disordered.

As to quaternary structure, interacts with VP3 in the cytoplasm. May exist in multiple phosphorylated forms.

It localises to the virion. The catalysed reaction is RNA(n) + a ribonucleoside 5'-triphosphate = RNA(n+1) + diphosphate. Functionally, RNA-dependent RNA polymerase which is found both free and covalently attached to the genomic RNA. May also contain guanylyl and methyl transferase activities. The protein is RNA-directed RNA polymerase (VP1) of Gallus gallus (Chicken).